A 412-amino-acid chain; its full sequence is Histone-lysine N-methyltransferase SUV39H1 (412 aa).

Residues 1-89 (MAENLKGCSV…LKCVRILKQF (89 aa)) are interaction with SIRT1. The Chromo domain occupies 43 to 101 (FEVEYLCDYKKIREQEYYLVKWRGYPDSESTWEPRQNLKCVRILKQFHKDLERELLRRH). Positions 179 to 240 (VGCECQDCLW…DCPNRVVQKG (62 aa)) constitute a Pre-SET domain. Zn(2+)-binding residues include Cys-181, Cys-183, Cys-186, Cys-194, Cys-195, Cys-222, Cys-226, Cys-228, and Cys-232. The SET domain occupies 243–366 (YDLCIFRTDD…AGEELTFDYN (124 aa)). Residue 254 to 256 (RGW) participates in S-adenosyl-L-methionine binding. The interval 255-377 (GWGVRTLEKI…QVDPVDMEST (123 aa)) is mediates interaction with MECOM. Position 266 is an N6-acetyllysine (Lys-266). S-adenosyl-L-methionine-binding positions include Tyr-297 and 323–324 (NH). Residue Cys-326 coordinates Zn(2+). Residue Ser-391 is modified to Phosphoserine. In terms of domain architecture, Post-SET spans 396 to 412 (VRIECKCGTESCRKYLF). Residues Cys-400, Cys-402, and Cys-407 each contribute to the Zn(2+) site.

Belongs to the class V-like SAM-binding methyltransferase superfamily. Histone-lysine methyltransferase family. Suvar3-9 subfamily. Interacts with H3 and H4 histones. Interacts with GFI1B, DNMT3B, CBX1, CBX4, CCAR2, MBD1, RUNX1, RUNX3, MYOD1, SMAD5 and RB1. Interacts with SBF1 through the SET domain. Interacts with HDAC1 and HDAC2 through the N-terminus and associates with the core histone deacetylase complex composed of HDAC1, HDAC2, RBBP4 and RBBP7. Component of the eNoSC complex, composed of SIRT1, SUV39H1 and RRP8. Interacts (via SET domain) with MECOM; enhances MECOM transcriptional repression activity. Interacts with LMNA; the interaction increases stability of SUV39H1. The large PER complex involved in the histone methylation is composed of at least PER2, CBX3, TRIM28, SUV39H1 and/or SUV39H2; CBX3 mediates the formation of the complex. As to quaternary structure, (Microbial infection) Interacts with HTLV-1 Tax protein, leading to abrogate Tax transactivation of HTLV-1 LTR. In terms of processing, phosphorylated on serine residues, and to a lesser degree, on threonine residues. The phosphorylated form is stabilized by SBF1 and is less active in its transcriptional repressor function. Ubiquitinated by the DCX(DCAF13) E3 ubiquitin ligase complex, leading to its degradation. Post-translationally, acetylated at Lys-266, leading to inhibition of enzyme activity. SIRT1-mediated deacetylation relieves this inhibition. In terms of processing, (Microbial infection) A higher molecular weight form is also seen in M.bovis infected cells.

It localises to the nucleus. It is found in the nucleus lamina. The protein localises to the nucleoplasm. The protein resides in the chromosome. Its subcellular location is the centromere. It localises to the cytoplasmic vesicle. It is found in the phagosome lumen. The protein localises to the cell membrane. The catalysed reaction is L-lysyl(9)-[histone H3] + 3 S-adenosyl-L-methionine = N(6),N(6),N(6)-trimethyl-L-lysyl(9)-[histone H3] + 3 S-adenosyl-L-homocysteine + 3 H(+). With respect to regulation, inhibited by S-adenosyl-L-homocysteine. Negatively regulated by CCAR2. Functionally, histone methyltransferase that specifically trimethylates 'Lys-9' of histone H3 using monomethylated H3 'Lys-9' as substrate. Also weakly methylates histone H1 (in vitro). H3 'Lys-9' trimethylation represents a specific tag for epigenetic transcriptional repression by recruiting HP1 (CBX1, CBX3 and/or CBX5) proteins to methylated histones. Mainly functions in heterochromatin regions, thereby playing a central role in the establishment of constitutive heterochromatin at pericentric and telomere regions. H3 'Lys-9' trimethylation is also required to direct DNA methylation at pericentric repeats. SUV39H1 is targeted to histone H3 via its interaction with RB1 and is involved in many processes, such as repression of MYOD1-stimulated differentiation, regulation of the control switch for exiting the cell cycle and entering differentiation, repression by the PML-RARA fusion protein, BMP-induced repression, repression of switch recombination to IgA and regulation of telomere length. Component of the eNoSC (energy-dependent nucleolar silencing) complex, a complex that mediates silencing of rDNA in response to intracellular energy status and acts by recruiting histone-modifying enzymes. The eNoSC complex is able to sense the energy status of cell: upon glucose starvation, elevation of NAD(+)/NADP(+) ratio activates SIRT1, leading to histone H3 deacetylation followed by dimethylation of H3 at 'Lys-9' (H3K9me2) by SUV39H1 and the formation of silent chromatin in the rDNA locus. Recruited by the large PER complex to the E-box elements of the circadian target genes such as PER2 itself or PER1, contributes to the conversion of local chromatin to a heterochromatin-like repressive state through H3 'Lys-9' trimethylation. In terms of biological role, (Microbial infection) Plays a role in defense against mycobacterial infections. Methylates M.tuberculosis HupB on 'Lys-140', probably methylates HupB of M.bovis also. Methylation has an inhibitory effect on mycobacterial growth in the host. Macrophages expressing about 60% SUV39H1 are slightly more susceptible to M.bovis or M.tuberculosis infection. Chaetocin (an inhibitor of this enzyme) increases macrophage survival of M.tuberculosis. This protein inhibits biofilm formation by M.tuberculosis via 'Lys-140' trimethylation. The polypeptide is Histone-lysine N-methyltransferase SUV39H1 (SUV39H1) (Homo sapiens (Human)).